The following is a 208-amino-acid chain: Ribosomal RNA large subunit methyltransferase E (208 aa).

The S-adenosyl-L-methionine site is built by glycine 63, tryptophan 65, aspartate 83, aspartate 99, and aspartate 124. The active-site Proton acceptor is the lysine 164.

It belongs to the class I-like SAM-binding methyltransferase superfamily. RNA methyltransferase RlmE family.

It is found in the cytoplasm. It carries out the reaction uridine(2552) in 23S rRNA + S-adenosyl-L-methionine = 2'-O-methyluridine(2552) in 23S rRNA + S-adenosyl-L-homocysteine + H(+). In terms of biological role, specifically methylates the uridine in position 2552 of 23S rRNA at the 2'-O position of the ribose in the fully assembled 50S ribosomal subunit. In Salmonella choleraesuis (strain SC-B67), this protein is Ribosomal RNA large subunit methyltransferase E.